Reading from the N-terminus, the 232-residue chain is Large ribosomal subunit protein uL1 (232 aa).

Belongs to the universal ribosomal protein uL1 family. In terms of assembly, part of the 50S ribosomal subunit.

Functionally, binds directly to 23S rRNA. The L1 stalk is quite mobile in the ribosome, and is involved in E site tRNA release. Its function is as follows. Protein L1 is also a translational repressor protein, it controls the translation of the L11 operon by binding to its mRNA. This chain is Large ribosomal subunit protein uL1, found in Chlamydia trachomatis serovar D (strain ATCC VR-885 / DSM 19411 / UW-3/Cx).